Reading from the N-terminus, the 342-residue chain is Ketol-acid reductoisomerase (NADP(+)) (342 aa).

A KARI N-terminal Rossmann domain is found at Val-2–Thr-181. Residues Tyr-25–Gln-28, Arg-48, Ser-52, and Asp-82–Gln-85 contribute to the NADP(+) site. His-107 is an active-site residue. Gly-133 provides a ligand contact to NADP(+). One can recognise a KARI C-terminal knotted domain in the interval Thr-182 to Val-327. Mg(2+) contacts are provided by Asp-190, Glu-194, Glu-226, and Glu-230. A substrate-binding site is contributed by Ser-251.

It belongs to the ketol-acid reductoisomerase family. Requires Mg(2+) as cofactor.

It carries out the reaction (2R)-2,3-dihydroxy-3-methylbutanoate + NADP(+) = (2S)-2-acetolactate + NADPH + H(+). It catalyses the reaction (2R,3R)-2,3-dihydroxy-3-methylpentanoate + NADP(+) = (S)-2-ethyl-2-hydroxy-3-oxobutanoate + NADPH + H(+). Its pathway is amino-acid biosynthesis; L-isoleucine biosynthesis; L-isoleucine from 2-oxobutanoate: step 2/4. It functions in the pathway amino-acid biosynthesis; L-valine biosynthesis; L-valine from pyruvate: step 2/4. Functionally, involved in the biosynthesis of branched-chain amino acids (BCAA). Catalyzes an alkyl-migration followed by a ketol-acid reduction of (S)-2-acetolactate (S2AL) to yield (R)-2,3-dihydroxy-isovalerate. In the isomerase reaction, S2AL is rearranged via a Mg-dependent methyl migration to produce 3-hydroxy-3-methyl-2-ketobutyrate (HMKB). In the reductase reaction, this 2-ketoacid undergoes a metal-dependent reduction by NADPH to yield (R)-2,3-dihydroxy-isovalerate. The protein is Ketol-acid reductoisomerase (NADP(+)) of Bacillus subtilis (strain 168).